A 147-amino-acid polypeptide reads, in one-letter code: Hemoglobin subunit gamma (147 aa).

The Globin domain occupies 3–147 (DFTAEEKAAI…VASAVARKYH (145 aa)). Residues histidine 64 and histidine 93 each contribute to the heme b site.

It belongs to the globin family. Heterotetramer of two alpha chains and two gamma chains in fetal hemoglobin (Hb F). In terms of tissue distribution, red blood cells.

In terms of biological role, gamma chains make up the fetal hemoglobin F, in combination with alpha chains. This chain is Hemoglobin subunit gamma (HBG), found in Trichechus manatus (Caribbean manatee).